The primary structure comprises 335 residues: Probable BOI-related E3 ubiquitin-protein ligase 3 (335 aa).

A WRD domain region spans residues 196–232 (LEEKVKSLCVENQIWRDVAQSNEATVNALRSNLQQVL). The RING-type zinc finger occupies 287–322 (CRSCGKGEASVLLLPCRHMCLCSVCGSSLNTCPICK).

Interacts with the DELLA proteins GAI, RGA, RGL1, RGL2 and RGL3.

The catalysed reaction is S-ubiquitinyl-[E2 ubiquitin-conjugating enzyme]-L-cysteine + [acceptor protein]-L-lysine = [E2 ubiquitin-conjugating enzyme]-L-cysteine + N(6)-ubiquitinyl-[acceptor protein]-L-lysine.. It functions in the pathway protein degradation; proteasomal ubiquitin-dependent pathway. Functionally, probable E3 ubiquitin-protein ligase. Has no effect on the stability of the DELLA proteins. In Arabidopsis thaliana (Mouse-ear cress), this protein is Probable BOI-related E3 ubiquitin-protein ligase 3 (BRG3).